A 156-amino-acid polypeptide reads, in one-letter code: MQTTKNQDDLVRIFKAILKEERFGSQSEIVTALQAEGFTNINQSKVSRMLSKFGAVRTRNAKQEMVYCLPAELGVPTAGSPLKNLVLDVDHNQAMIVVRTSPGAAQLIARLLDSIGKPEGILGTIAGDDTIFICPSSIQDIADTLETIKSLFNYAE.

It belongs to the ArgR family.

Its subcellular location is the cytoplasm. The protein operates within amino-acid biosynthesis; L-arginine biosynthesis [regulation]. Its function is as follows. Regulates arginine biosynthesis genes. This is Arginine repressor from Shewanella oneidensis (strain ATCC 700550 / JCM 31522 / CIP 106686 / LMG 19005 / NCIMB 14063 / MR-1).